Here is a 222-residue protein sequence, read N- to C-terminus: N-acetyltransferase 8F1 (222 aa).

The helical transmembrane segment at 53 to 73 (LVLVSGSWILAVICIFFLLLL) threads the bilayer. Positions 69-220 (FLLLLLRLLA…CTIQLKYSFP (152 aa)) constitute an N-acetyltransferase domain.

This sequence belongs to the camello family.

The protein localises to the membrane. Its function is as follows. May play a role in regulation of gastrulation. This Mus musculus (Mouse) protein is N-acetyltransferase 8F1.